A 286-amino-acid polypeptide reads, in one-letter code: Orotidine 5'-phosphate decarboxylase (286 aa).

Substrate is bound by residues D35, 57–59 (KTH), 89–98 (DRKFADIGNT), Y239, and R257. The active-site Proton donor is K91.

The protein belongs to the OMP decarboxylase family.

The enzyme catalyses orotidine 5'-phosphate + H(+) = UMP + CO2. It functions in the pathway pyrimidine metabolism; UMP biosynthesis via de novo pathway; UMP from orotate: step 2/2. This chain is Orotidine 5'-phosphate decarboxylase (URA3), found in Yarrowia lipolytica (strain CLIB 122 / E 150) (Yeast).